A 375-amino-acid polypeptide reads, in one-letter code: Odorant receptor 49b (375 aa).

The Cytoplasmic segment spans residues 1-28 (MFEDIQLIYMNIKILRFWALLYDKNLRR). A helical membrane pass occupies residues 29–49 (YVCIGLASFHIFTQIVYMMST). Over 50–60 (NEGLTGIIRNS) the chain is Extracellular. Residues 61-77 (YMLVLWINTVLRAYLLL) form a helical membrane-spanning segment. The Cytoplasmic segment spans residues 78 to 121 (ADHDRYLALIQKLTEAYYDLLNLNDSYISEILDQVNKVGKLMAR). A helical transmembrane segment spans residues 122–142 (GNLFFGMLTSMGFGLYPLSSS). Residues 143–176 (ERVLPFGSKIPGLNEYESPYYEMWYIFQMLITPM) lie on the Extracellular side of the membrane. A helical membrane pass occupies residues 177 to 197 (GCCMYIPYTSLIVGLIMFGIV). Over 198–251 (RCKALQHRLRQVALKHPYGDRDPRELREEIIACIRYQQSIIEYMDHINELTTMM) the chain is Cytoplasmic. Residues 252–272 (FLFELMAFSALLCALLFMLII) form a helical membrane-spanning segment. The Extracellular segment spans residues 273–278 (VSGTSQ). Residues 279–299 (LIIVCMYINMILAQILALYWY) traverse the membrane as a helical segment. Residues 300–342 (ANELREQNLAVATAAYETEWFTFDVPLRKNILFMMMRAQRPAA) lie on the Cytoplasmic side of the membrane. The chain crosses the membrane as a helical span at residues 343-363 (ILLGNIRPITLELFQNLLNTT). The Extracellular segment spans residues 364–375 (YTFFTVLKRVYG).

The protein belongs to the insect chemoreceptor superfamily. Heteromeric odorant receptor channel (TC 1.A.69) family. Or30a subfamily. As to quaternary structure, interacts with Orco. Complexes exist early in the endomembrane system in olfactory sensory neurons (OSNs), coupling these complexes to the conserved ciliary trafficking pathway. Expressed in olfactory sensory neurons in the antenna.

The protein localises to the cell membrane. Odorant receptor which mediates acceptance or avoidance behavior, depending on its substrates. The odorant receptor repertoire encodes a large collection of odor stimuli that vary widely in identity, intensity, and duration. May form a complex with Orco to form odorant-sensing units, providing sensitive and prolonged odorant signaling and calcium permeability. This is Odorant receptor 49b (Or49b) from Drosophila melanogaster (Fruit fly).